A 187-amino-acid polypeptide reads, in one-letter code: Dihydrofolate reductase (187 aa).

Residues 4–185 form the DHFR domain; it reads PLNCIVAVSQ…IKYKFEVYEK (182 aa). NADP(+) contacts are provided by residues Ala-10 and 16-22; that span reads GIGKNGD. 31-36 is a substrate binding site; that stretch reads EFQYFQ. 55-57 is a binding site for NADP(+); that stretch reads RKT. Residue Arg-71 coordinates substrate. NADP(+) is bound by residues 77-79 and 117-124; these read SRE and GGSSVYKE.

The protein belongs to the dihydrofolate reductase family. In terms of assembly, homodimer.

Its subcellular location is the mitochondrion. It is found in the cytoplasm. The catalysed reaction is (6S)-5,6,7,8-tetrahydrofolate + NADP(+) = 7,8-dihydrofolate + NADPH + H(+). It participates in cofactor biosynthesis; tetrahydrofolate biosynthesis; 5,6,7,8-tetrahydrofolate from 7,8-dihydrofolate: step 1/1. Key enzyme in folate metabolism. Contributes to the de novo mitochondrial thymidylate biosynthesis pathway. Catalyzes an essential reaction for de novo glycine and purine synthesis, and for DNA precursor synthesis. Binds its own mRNA and that of DHFR2. This is Dihydrofolate reductase (DHFR) from Bos taurus (Bovine).